The sequence spans 397 residues: Odorant receptor 85a (397 aa).

Residues 1-46 (MIFKYIQEPVLGSLFRSRDSLIYLNRSIDQMGWRLPPRTKPYWWLY) are Cytoplasmic-facing. The helical transmembrane segment at 47–67 (YIWTLVVIVLVFIFIPYGLIM) threads the bilayer. Residues 68-83 (TGIKEFKNFTTTDLFT) lie on the Extracellular side of the membrane. N-linked (GlcNAc...) asparagine glycosylation is present at Asn75. A helical transmembrane segment spans residues 84–104 (YVQVPVNTNASIMKGIIVLFM). Topologically, residues 105–142 (RRRFSRAQKMMDAMDIRCTKMEEKVQVHRAAALCNRVV) are cytoplasmic. The chain crosses the membrane as a helical span at residues 143–163 (VIYHCIYFGYLSMALTGALVI). Residues 164-192 (GKTPFCLYNPLVNPDDHFYLATAIESVTM) are Extracellular-facing. Residues 193 to 213 (AGIILANLILDVYPIIYVVVL) traverse the membrane as a helical segment. Topologically, residues 214-262 (RIHMELLSERIKTLRTDVEKGDDQHYAELVECVKDHKLIVEYGNTLRPM) are cytoplasmic. The chain crosses the membrane as a helical span at residues 263–283 (ISATMFIQLLSVGLLLGLAAV). Topologically, residues 284–294 (SMQFYNTVMER) are extracellular. The chain crosses the membrane as a helical span at residues 295-315 (VVSGVYTIAILSQTFPFCYVC). Over 316 to 347 (EQLSSDCESLTNTLFHSKWIGAERRYRTTMLY) the chain is Cytoplasmic. A helical membrane pass occupies residues 348–368 (FIHNVQQSILFTAGGIFPICL). Topologically, residues 369–397 (NTNIKMAKFAFSVVTIVNEMDLAEKLRRE) are extracellular.

This sequence belongs to the insect chemoreceptor superfamily. Heteromeric odorant receptor channel (TC 1.A.69) family. Or2a subfamily. Interacts with Orco. Complexes exist early in the endomembrane system in olfactory sensory neurons (OSNs), coupling these complexes to the conserved ciliary trafficking pathway. As to expression, expressed in olfactory sensory neurons in the antenna.

It is found in the cell membrane. Odorant receptor which mediates acceptance or avoidance behavior, depending on its substrates. The odorant receptor repertoire encodes a large collection of odor stimuli that vary widely in identity, intensity, and duration. May form a complex with Orco to form odorant-sensing units, providing sensitive and prolonged odorant signaling and calcium permeability. The polypeptide is Odorant receptor 85a (Or85a) (Drosophila melanogaster (Fruit fly)).